A 361-amino-acid polypeptide reads, in one-letter code: Serine/threonine-protein kinase SAPK9 (361 aa).

Positions Y22–F278 constitute a Protein kinase domain. ATP contacts are provided by residues I28 to A36 and K51. D141 serves as the catalytic Proton acceptor.

This sequence belongs to the protein kinase superfamily. Ser/Thr protein kinase family. As to quaternary structure, interacts with BZIP46. Post-translationally, may be phosphorylated. As to expression, expressed in leaf sheaths and roots. Expressed in shoots of young seedlings.

The protein localises to the cytoplasm. It localises to the nucleus. The enzyme catalyses L-seryl-[protein] + ATP = O-phospho-L-seryl-[protein] + ADP + H(+). The catalysed reaction is L-threonyl-[protein] + ATP = O-phospho-L-threonyl-[protein] + ADP + H(+). Its activity is regulated as follows. Activated by hyperosmotic stress and abscisic acid (ABA). Functionally, may play a role in signal transduction of hyperosmotic response. Can phosphorylate BZIP46 in vitro. The polypeptide is Serine/threonine-protein kinase SAPK9 (SAPK9) (Oryza sativa subsp. japonica (Rice)).